A 114-amino-acid polypeptide reads, in one-letter code: Probable non-functional T cell receptor beta variable 5-7 (114 aa).

Positions 1-21 (MGPGLLCWVLLCPLGEGPVDA) are cleaved as a signal peptide. The Ig-like domain maps to 22–114 (GVTQSPTHLI…SALYLCASSL (93 aa)). Cysteines 42 and 110 form a disulfide. Residue asparagine 90 is glycosylated (N-linked (GlcNAc...) asparagine).

In terms of assembly, alpha-beta TR is a heterodimer composed of an alpha and beta chain; disulfide-linked. The alpha-beta TR is associated with the transmembrane signaling CD3 coreceptor proteins to form the TR-CD3 (TcR or TCR). The assembly of alpha-beta TR heterodimers with CD3 occurs in the endoplasmic reticulum where a single alpha-beta TR heterodimer associates with one CD3D-CD3E heterodimer, one CD3G-CD3E heterodimer and one CD247 homodimer forming a stable octameric structure. CD3D-CD3E and CD3G-CD3E heterodimers preferentially associate with TR alpha and TR beta chains, respectively. The association of the CD247 homodimer is the last step of TcR assembly in the endoplasmic reticulum and is required for transport to the cell surface.

It is found in the cell membrane. Functionally, probable non-functional open reading frame (ORF) of V region of the variable domain of T cell receptor (TR) beta chain. Non-functional ORF generally cannot participate in the synthesis of a productive T cell receptor (TR) chain due to altered V-(D)-J or switch recombination and/or splicing site (at mRNA level) and/or conserved amino acid change (protein level). Alpha-beta T cell receptors are antigen specific receptors which are essential to the immune response and are present on the cell surface of T lymphocytes. Recognize peptide-major histocompatibility (MH) (pMH) complexes that are displayed by antigen presenting cells (APC), a prerequisite for efficient T cell adaptive immunity against pathogens. Binding of alpha-beta TR to pMH complex initiates TR-CD3 clustering on the cell surface and intracellular activation of LCK that phosphorylates the ITAM motifs of CD3G, CD3D, CD3E and CD247 enabling the recruitment of ZAP70. In turn ZAP70 phosphorylates LAT, which recruits numerous signaling molecules to form the LAT signalosome. The LAT signalosome propagates signal branching to three major signaling pathways, the calcium, the mitogen-activated protein kinase (MAPK) kinase and the nuclear factor NF-kappa-B (NF-kB) pathways, leading to the mobilization of transcription factors that are critical for gene expression and essential for T cell growth and differentiation. The T cell repertoire is generated in the thymus, by V-(D)-J rearrangement. This repertoire is then shaped by intrathymic selection events to generate a peripheral T cell pool of self-MH restricted, non-autoaggressive T cells. Post-thymic interaction of alpha-beta TR with the pMH complexes shapes TR structural and functional avidity. This chain is Probable non-functional T cell receptor beta variable 5-7, found in Homo sapiens (Human).